We begin with the raw amino-acid sequence, 117 residues long: Large ribosomal subunit protein uL22 (117 aa).

This sequence belongs to the universal ribosomal protein uL22 family. As to quaternary structure, part of the 50S ribosomal subunit.

Functionally, this protein binds specifically to 23S rRNA; its binding is stimulated by other ribosomal proteins, e.g. L4, L17, and L20. It is important during the early stages of 50S assembly. It makes multiple contacts with different domains of the 23S rRNA in the assembled 50S subunit and ribosome. The globular domain of the protein is located near the polypeptide exit tunnel on the outside of the subunit, while an extended beta-hairpin is found that lines the wall of the exit tunnel in the center of the 70S ribosome. The chain is Large ribosomal subunit protein uL22 from Synechococcus elongatus (strain ATCC 33912 / PCC 7942 / FACHB-805) (Anacystis nidulans R2).